Consider the following 569-residue polypeptide: Laccase-14 (569 aa).

The first 33 residues, 1 to 33 (MEFKLNIPNTIIKTLQTIVFFLFVLLAFQIAEA), serve as a signal peptide directing secretion. Plastocyanin-like domains are found at residues 41-157 (KIKS…PKRG) and 167-320 (REIP…YKGD). N-linked (GlcNAc...) asparagine glycosylation is present at Asn-87. Positions 91, 93, 136, and 138 each coordinate Cu cation. Asn-190, Asn-249, Asn-336, Asn-374, Asn-395, Asn-430, and Asn-452 each carry an N-linked (GlcNAc...) asparagine glycan. Positions 420-553 (DFPRNPPTKF…NTVFIVKDGP (134 aa)) constitute a Plastocyanin-like 3 domain. 8 residues coordinate Cu cation: His-470, His-473, His-475, His-532, Cys-533, His-534, His-538, and Met-543.

It belongs to the multicopper oxidase family. The cofactor is Cu cation. Expressed at low levels in flowers and siliques.

Its subcellular location is the secreted. It localises to the extracellular space. It is found in the apoplast. It carries out the reaction 4 hydroquinone + O2 = 4 benzosemiquinone + 2 H2O. Functionally, lignin degradation and detoxification of lignin-derived products. This Arabidopsis thaliana (Mouse-ear cress) protein is Laccase-14 (LAC14).